Reading from the N-terminus, the 688-residue chain is Glycine--tRNA ligase beta subunit (688 aa).

This sequence belongs to the class-II aminoacyl-tRNA synthetase family. As to quaternary structure, tetramer of two alpha and two beta subunits.

Its subcellular location is the cytoplasm. The catalysed reaction is tRNA(Gly) + glycine + ATP = glycyl-tRNA(Gly) + AMP + diphosphate. The chain is Glycine--tRNA ligase beta subunit from Aliivibrio fischeri (strain ATCC 700601 / ES114) (Vibrio fischeri).